Here is a 357-residue protein sequence, read N- to C-terminus: DNA polymerase IV (357 aa).

In terms of domain architecture, UmuC spans 4–185 (IIHCDCDCFY…LPVERLFGVG (182 aa)). Mg(2+)-binding residues include D8 and D103. E104 is an active-site residue.

It belongs to the DNA polymerase type-Y family. As to quaternary structure, monomer. The cofactor is Mg(2+).

The protein resides in the cytoplasm. It catalyses the reaction DNA(n) + a 2'-deoxyribonucleoside 5'-triphosphate = DNA(n+1) + diphosphate. Its function is as follows. Poorly processive, error-prone DNA polymerase involved in untargeted mutagenesis. Copies undamaged DNA at stalled replication forks, which arise in vivo from mismatched or misaligned primer ends. These misaligned primers can be extended by PolIV. Exhibits no 3'-5' exonuclease (proofreading) activity. May be involved in translesional synthesis, in conjunction with the beta clamp from PolIII. In Ralstonia nicotianae (strain ATCC BAA-1114 / GMI1000) (Ralstonia solanacearum), this protein is DNA polymerase IV.